Here is a 160-residue protein sequence, read N- to C-terminus: Dihydrofolate reductase (160 aa).

The DHFR domain occupies 2-159 (TFSLIVATTL…YDCRFLILTR (158 aa)). Residue isoleucine 6 coordinates substrate. NADP(+) contacts are provided by residues alanine 8 and 14–20 (VIGKDNQ). Aspartate 28 provides a ligand contact to substrate. 46 to 47 (KT) lines the NADP(+) pocket. Substrate-binding residues include arginine 53 and arginine 58. NADP(+) contacts are provided by residues 64 to 65 (SR) and 96 to 103 (GGGELFKQ). Threonine 114 lines the substrate pocket.

Belongs to the dihydrofolate reductase family.

The enzyme catalyses (6S)-5,6,7,8-tetrahydrofolate + NADP(+) = 7,8-dihydrofolate + NADPH + H(+). Its pathway is cofactor biosynthesis; tetrahydrofolate biosynthesis; 5,6,7,8-tetrahydrofolate from 7,8-dihydrofolate: step 1/1. Functionally, key enzyme in folate metabolism. Catalyzes an essential reaction for de novo glycine and purine synthesis, and for DNA precursor synthesis. This chain is Dihydrofolate reductase (folA), found in Haemophilus influenzae (strain ATCC 51907 / DSM 11121 / KW20 / Rd).